The sequence spans 150 residues: UPF0260 protein PputGB1_4117 (150 aa).

The protein belongs to the UPF0260 family.

This Pseudomonas putida (strain GB-1) protein is UPF0260 protein PputGB1_4117.